The primary structure comprises 728 residues: E3 ubiquitin-protein ligase TRIM36 (728 aa).

Residues 33 to 84 (CPACKELFTHPLILPCQHSICHKCVKELLLTLDDSFNDVGSDNSNQSSPRLR) form an RING-type; degenerate zinc finger. 2 B box-type zinc fingers span residues 154-192 (AIMCDLCKPPPQESTKSCMDCSASYCNECFKIHHPWGTI) and 207-249 (PKIL…VTTM). Zn(2+) is bound by residues C212, H215, C235, and H241. Residues 271-345 (ESQVKSQISE…MEEYQGLLEN (75 aa)) are a coiled coil. A COS domain is found at 356–413 (LKETDQSCFVQTAKQLHLRIQKATESLKSFRPAAQTSFEDYVVNTSKQTELLGELSFF). The 92-residue stretch at 419-510 (VPEINEEQSK…RELILHTPPA (92 aa)) folds into the Fibronectin type-III domain. One can recognise a B30.2/SPRY domain in the interval 508–720 (PPAPVFSFLF…IQLEEPITAK (213 aa)).

The protein belongs to the TRIM/RBCC family. In terms of assembly, interacts with CENPH. As to expression, highly expressed in testis, prostate and brain. Weakly expressed in kidney, lung and heart. Expressed in fetal tissues.

The protein resides in the cytoplasm. It localises to the cytoplasmic vesicle. The protein localises to the secretory vesicle. It is found in the acrosome. Its subcellular location is the cytoskeleton. It catalyses the reaction S-ubiquitinyl-[E2 ubiquitin-conjugating enzyme]-L-cysteine + [acceptor protein]-L-lysine = [E2 ubiquitin-conjugating enzyme]-L-cysteine + N(6)-ubiquitinyl-[acceptor protein]-L-lysine.. In terms of biological role, E3 ubiquitin-protein ligase which mediates ubiquitination and subsequent proteasomal degradation of target proteins. Involved in chromosome segregation and cell cycle regulation. May play a role in the acrosome reaction and fertilization. In Homo sapiens (Human), this protein is E3 ubiquitin-protein ligase TRIM36 (TRIM36).